The sequence spans 315 residues: Probable diguanylate cyclase DgcF (315 aa).

The next 4 helical transmembrane spans lie at 10–30 (FSTGVLIVPCMLTLAIPGVLP), 41–61 (IALIVSVIASVVIGGAGSLAF), 80–100 (LLTFVTGAVEIVLVANSVIDI), and 116–136 (LGIATMAICPIMVSFSVAAIN). The GGDEF domain occupies 173–310 (QHLTVMLLDI…GRNRTSTMRY (138 aa)). Positions 181 and 182 each coordinate Mg(2+). Substrate is bound by residues Asn-189, His-194, and Asp-198. Glu-224 lines the Mg(2+) pocket.

As to quaternary structure, homodimer. The cofactor is Mg(2+).

It localises to the cell membrane. The catalysed reaction is 2 GTP = 3',3'-c-di-GMP + 2 diphosphate. It functions in the pathway purine metabolism; 3',5'-cyclic di-GMP biosynthesis. Catalyzes the synthesis of cyclic-di-GMP (c-di-GMP) via the condensation of 2 GTP molecules. The chain is Probable diguanylate cyclase DgcF from Escherichia coli (strain K12).